Reading from the N-terminus, the 1198-residue chain is MALVQAHRARRLHAEAPDSGDQPPRRRVRQQPPRAAPAPARARRRRAPAPSPGGSRAPPTSGGPPASPLLDASSKDTPAAHRPPRGTVVAPRGCGLLQVIDAATNQPLEIRYHLDLARALTRLCEVNLQELPPDLSPRELQTMDSSHLRDVVIKLRPPRADIWTLGSRGVVVRSTITPLEQPDGQGQAAEVEDHQPNPPGEGLKFPLCFLVRGRQVNLVQDVQPVHRCQYCARFYKSQHECSARRRDFYFHHINSHSSNWWREIQFFPIGSHPRTERLFVTYDVETYTWMGAFGKQLVPFMLVMKFGGDEPLVTAARDLAVDLGWDRWEQDPLTFYCITPEKMAIGRQFRTFRDHLQMLMARDLWSSFVASNPHLADWALSEHGLSSPEELTYEELKKLPSIKGTPRFLELYIVGHNINGFDEIVLAAQVINNRSEVPGPFRITRNFMPRAGKILFNDVTFALPNPRSKKRTDFLLWEQGGCDDTDFKYQYLKVMVRDTFALTHTSLRKAAQAYALPVEKGCCAYQAVNQFYMLGSYRSEADGFPIQEYWKDREEFVLNRELWKKKGQDKYDIIKETLDYCALDVQVTAELVNKLRDSYASFVRDAVGLTDASFNVFQRPTISSNSHAIFRQIVFRAEQPARSNLGPDLLAPSHELYDYVRASIRGGRCYPTYLGILREPLYVYDICGMYASALTHPMPWGPPLNPYERALAARAWQQALDLQGCKIDYFDARLLPGVFTVDADPPDETQLDPLPPFCSRKGGRLCWTNERLRGEVATSVDLVTLHNRGWRVHLVPDERTTVFPEWRCVAREYVQLNIAAKERADRDKNQTLRSIAKLLSNALYGSFATKLDNKKIVFSDQMDAATLKGITAGQVNIKSSSFLETDNLSAEVMPAFEREYSPQQLALADSDAEESEDERAPTPFYSPPSGTPGHVAYTYKPITFLDAEEGDMCLHTLERVDPLVDNDRYPSHLASFVLAWTRAFVSEWSEFLYEEDRGTPLEDRPLKSVYGDTDSLFVTERGHRLMETRGKKRIKKHGGNLVFDPERPELTWLVECETVCGACGADAYSPESVFLAPKLYALKSLHCPSCGASSKGKLRAKGHAAEGLDYDTMVKCYLADAQGEDRQRFSTSRTSLKRTLASAQPGAHPFTVTQTTLTRTLRPWKDMTLARLDEHRLLPYSESRPNPRNEEICWIEMP.

3 disordered regions span residues 1–90 (MALV…TVVA), 179–198 (LEQP…QPNP), and 906–931 (ALAD…PSGT). Residues 30-40 (QQPPRAAPAPA) are compositionally biased toward low complexity.

It belongs to the DNA polymerase type-B family. Heterodimer with the terminal protein; this heterodimer binds to bp 9 to 18 of the genome. Forms a complex with viral pTP, DBP and hosts NFIA and POU2F1/OCT1 for initiation of replication.

The protein localises to the host nucleus. The catalysed reaction is DNA(n) + a 2'-deoxyribonucleoside 5'-triphosphate = DNA(n+1) + diphosphate. In terms of biological role, eukaryotic-type DNA polymerase involved in viral genomic replication. DNA synthesis is protein primed, and acts in a strand displacement replication. Assembles in complex with viral pTP, DBP, host NFIA and host POU2F1/OCT1 on viral origin of replication. The polymerase covalently transfers dCMP onto pTP, thereby initiating complementary strand synthesis. This is DNA polymerase from Homo sapiens (Human).